Here is a 267-residue protein sequence, read N- to C-terminus: MPVFHFKDTLTAQDVALNYATFGQADRPALIFSNSLGTNLSMWQQQIAYFQDKYFVICYDTRGHGASSTPVGPYRIDQLGTDVIALLDHLQIPQATFCGISMGGLTGQWLAIHFPERFNQVIVANTAAKIGEAQAWQARAQLVREQGLTPIAQTAATRWFTPGFIEDSPEIVEKLSHDLAQGSAEGYASCCEALAEADVRPQLQRISIPVLVIAGAQDPVTTVADGQFLCEHIVHSTLEVLEASHISNVEQPQAFNHAVEAVMKRFN.

It carries out the reaction (4,5-dihydro-5-oxofuran-2-yl)-acetate + H2O = 3-oxoadipate + H(+). It functions in the pathway aromatic compound metabolism; beta-ketoadipate pathway; 3-oxoadipate from 5-oxo-4,5-dihydro-2-furylacetate: step 1/1. This is 3-oxoadipate enol-lactonase 2 (catD) from Acinetobacter baylyi (strain ATCC 33305 / BD413 / ADP1).